A 169-amino-acid polypeptide reads, in one-letter code: Probable GPI-anchored adhesin-like protein PGA22 (169 aa).

Residues 1–18 form the signal peptide; that stretch reads MKYSTLAWLVIASYTVFA. Residues Asn87, Asn104, Asn111, and Asn118 are each glycosylated (N-linked (GlcNAc...) asparagine). A lipid anchor (GPI-anchor amidated glycine) is attached at Gly140. A propeptide spans 141–169 (removed in mature form); sequence PALTTTTVAEAFSLAAGASLGYLVALLFL.

The protein localises to the cell membrane. In terms of biological role, putative adhesin which may be involved in cell adhesion and virulence. This Candida albicans (strain SC5314 / ATCC MYA-2876) (Yeast) protein is Probable GPI-anchored adhesin-like protein PGA22 (PGA22).